The primary structure comprises 358 residues: Phospho-N-acetylmuramoyl-pentapeptide-transferase (358 aa).

10 helical membrane-spanning segments follow: residues 19 to 39 (YLTL…VLIG), 71 to 91 (TMGG…WADL), 95 to 115 (YVWV…IDDY), 126 to 146 (LIAR…ALYL), 166 to 186 (VMPQ…VGTS), 194 to 214 (GLDG…AIFA), 237 to 257 (LVIV…FNTY), 261 to 281 (VFMG…IAVL), 286 to 306 (IVLV…ILQV), and 336 to 356 (VIVR…ATLK).

Belongs to the glycosyltransferase 4 family. MraY subfamily. Mg(2+) serves as cofactor.

The protein localises to the cell inner membrane. The enzyme catalyses UDP-N-acetyl-alpha-D-muramoyl-L-alanyl-gamma-D-glutamyl-meso-2,6-diaminopimeloyl-D-alanyl-D-alanine + di-trans,octa-cis-undecaprenyl phosphate = di-trans,octa-cis-undecaprenyl diphospho-N-acetyl-alpha-D-muramoyl-L-alanyl-D-glutamyl-meso-2,6-diaminopimeloyl-D-alanyl-D-alanine + UMP. Its pathway is cell wall biogenesis; peptidoglycan biosynthesis. Its function is as follows. Catalyzes the initial step of the lipid cycle reactions in the biosynthesis of the cell wall peptidoglycan: transfers peptidoglycan precursor phospho-MurNAc-pentapeptide from UDP-MurNAc-pentapeptide onto the lipid carrier undecaprenyl phosphate, yielding undecaprenyl-pyrophosphoryl-MurNAc-pentapeptide, known as lipid I. The polypeptide is Phospho-N-acetylmuramoyl-pentapeptide-transferase (Pseudoalteromonas atlantica (strain T6c / ATCC BAA-1087)).